A 101-amino-acid polypeptide reads, in one-letter code: Integration host factor subunit beta (101 aa).

The protein belongs to the bacterial histone-like protein family. Heterodimer of an alpha and a beta chain.

This protein is one of the two subunits of integration host factor, a specific DNA-binding protein that functions in genetic recombination as well as in transcriptional and translational control. This chain is Integration host factor subunit beta, found in Maricaulis maris (strain MCS10) (Caulobacter maris).